Here is an 880-residue protein sequence, read N- to C-terminus: Valine--tRNA ligase (880 aa).

A 'HIGH' region motif is present at residues 49–59; the sequence is PNVTGKLHLGH. The short motif at 525–529 is the 'KMSKS' region element; the sequence is KMSKS. Lys-528 contributes to the ATP binding site. Residues 809–880 adopt a coiled-coil conformation; sequence LEGLINIEEE…VKARLAELKR (72 aa).

It belongs to the class-I aminoacyl-tRNA synthetase family. ValS type 1 subfamily. Monomer.

The protein resides in the cytoplasm. It carries out the reaction tRNA(Val) + L-valine + ATP = L-valyl-tRNA(Val) + AMP + diphosphate. Functionally, catalyzes the attachment of valine to tRNA(Val). As ValRS can inadvertently accommodate and process structurally similar amino acids such as threonine, to avoid such errors, it has a 'posttransfer' editing activity that hydrolyzes mischarged Thr-tRNA(Val) in a tRNA-dependent manner. The sequence is that of Valine--tRNA ligase (valS) from Geobacillus stearothermophilus (Bacillus stearothermophilus).